We begin with the raw amino-acid sequence, 880 residues long: Zinc-responsive transcriptional regulator ZAP1 (880 aa).

2 disordered regions span residues 1 to 26 and 140 to 164; these read MDAL…AASA and NNFH…PRRK. Positions 17-26 are enriched in low complexity; the sequence is ATSAATAASA. Residues 147–158 are compositionally biased toward polar residues; it reads SDPTSPQQNSKS. Residues Ser-156 and Ser-166 each carry the phosphoserine modification. Residues 182-502 form a zinc-responsive domain 1 (ZRD(AD1)) region; sequence KPNPPPGSDD…LTNNDLNDLI (321 aa). Residues 207 to 402 form a transcription activation domain 1 (AD1) region; it reads HPKSEANIKQ…YEVPFGKHIN (196 aa). Disordered stretches follow at residues 436 to 482 and 510 to 555; these read NRCN…VNNS and RFRN…PSSI. A compositionally biased stretch (low complexity) spans 442-456; sequence NNLNGSNNNTAGATS. Basic residues predominate over residues 460–474; that stretch reads QHHHHRIQFHSHKPN. At Ser-515 the chain carries Phosphoserine. The span at 545 to 555 shows a compositional bias: low complexity; sequence SSLEDSLPSSI. The segment at 579 to 604 adopts a C2H2-type 1 zinc-finger fold; the sequence is LKCKWKECPESCSSLFDLQRHLLKDH. Residues 579 to 641 are zinc-responsive domain 2 (ZRD(AD2)); sequence LKCKWKECPE…SIVNHINCQH (63 aa). 8 residues coordinate Zn(2+): Cys-581, Cys-586, His-599, His-604, Cys-618, Cys-623, His-636, and His-641. The transcription activation domain 2 (AD2) stretch occupies residues 611-640; sequence HPMEPLACNWEDCDFLGDDTCSIVNHINCQ. The C2H2-type 2; atypical zinc-finger motif lies at 616-641; it reads LACNWEDCDFLGDDTCSIVNHINCQH. C2H2-type zinc fingers lie at residues 705–730, 738–762, 768–790, 796–818, and 824–846; these read VICQ…EAVH, YQCL…LKVH, YKCK…TRTH, YKCH…IRTH, and LQCK…IKTH. The segment at residues 705 to 846 is a DNA-binding region (DNA-binding domain); the sequence is VICQWDGCNK…SNLSKHIKTH (142 aa).

It is found in the nucleus. Its activity is regulated as follows. Active in zinc-limited cells and repressed in replete cells. Zinc controls ZAP1 DNA binding activity. Its function is as follows. Transcription regulator controlling zinc-responsive gene expression. Binds to zinc-responsive elements (ZREs) (consensus sequence 5'-ACCYYNAAGGT-3') in the promoter of target genes. Recruits SWI/SNF, SAGA, and Mediator complexes as coactivators in a zinc-responsive manner. Involved in zinc ion homeostasis by zinc-responsive transcriptional regulation of the zinc uptake system genes ZTR1 and ZTR2. Positively regulates ETR1 expression, affecting mitochondrial function. The polypeptide is Zinc-responsive transcriptional regulator ZAP1 (ZAP1) (Saccharomyces cerevisiae (strain ATCC 204508 / S288c) (Baker's yeast)).